Reading from the N-terminus, the 127-residue chain is Fluoride-specific ion channel FluC (127 aa).

Helical transmembrane passes span 4 to 24 (LLLA…MLSM), 35 to 55 (IGTL…FAWF), 71 to 91 (TGFC…VFLL), and 103 to 123 (VLIN…LFSA). Residues Gly75 and Thr78 each coordinate Na(+).

It belongs to the fluoride channel Fluc/FEX (TC 1.A.43) family.

It is found in the cell inner membrane. The catalysed reaction is fluoride(in) = fluoride(out). Its activity is regulated as follows. Na(+) is not transported, but it plays an essential structural role and its presence is essential for fluoride channel function. Its function is as follows. Fluoride-specific ion channel. Important for reducing fluoride concentration in the cell, thus reducing its toxicity. The sequence is that of Fluoride-specific ion channel FluC from Salmonella agona (strain SL483).